We begin with the raw amino-acid sequence, 172 residues long: S-ribosylhomocysteine lyase (172 aa).

His54, His58, and Cys128 together coordinate Fe cation.

The protein belongs to the LuxS family. As to quaternary structure, homodimer. Requires Fe cation as cofactor.

The catalysed reaction is S-(5-deoxy-D-ribos-5-yl)-L-homocysteine = (S)-4,5-dihydroxypentane-2,3-dione + L-homocysteine. Its function is as follows. Involved in the synthesis of autoinducer 2 (AI-2) which is secreted by bacteria and is used to communicate both the cell density and the metabolic potential of the environment. The regulation of gene expression in response to changes in cell density is called quorum sensing. Catalyzes the transformation of S-ribosylhomocysteine (RHC) to homocysteine (HC) and 4,5-dihydroxy-2,3-pentadione (DPD). The protein is S-ribosylhomocysteine lyase of Vibrio parahaemolyticus serotype O3:K6 (strain RIMD 2210633).